A 180-amino-acid chain; its full sequence is NAD(P)H-quinone oxidoreductase subunit I, chloroplastic (180 aa).

4Fe-4S ferredoxin-type domains follow at residues 55–84 (GRIH…VDWR) and 95–124 (LNYS…MTEE). The [4Fe-4S] cluster site is built by Cys64, Cys67, Cys70, Cys74, Cys104, Cys107, Cys110, and Cys114.

It belongs to the complex I 23 kDa subunit family. As to quaternary structure, NDH is composed of at least 16 different subunits, 5 of which are encoded in the nucleus. [4Fe-4S] cluster is required as a cofactor.

It localises to the plastid. Its subcellular location is the chloroplast thylakoid membrane. The enzyme catalyses a plastoquinone + NADH + (n+1) H(+)(in) = a plastoquinol + NAD(+) + n H(+)(out). It carries out the reaction a plastoquinone + NADPH + (n+1) H(+)(in) = a plastoquinol + NADP(+) + n H(+)(out). Its function is as follows. NDH shuttles electrons from NAD(P)H:plastoquinone, via FMN and iron-sulfur (Fe-S) centers, to quinones in the photosynthetic chain and possibly in a chloroplast respiratory chain. The immediate electron acceptor for the enzyme in this species is believed to be plastoquinone. Couples the redox reaction to proton translocation, and thus conserves the redox energy in a proton gradient. The sequence is that of NAD(P)H-quinone oxidoreductase subunit I, chloroplastic from Dioscorea elephantipes (Elephant's foot yam).